The sequence spans 496 residues: Cytochrome P450 71D180 (496 aa).

The helical; Signal-anchor for type II membrane protein transmembrane segment at 1–21 threads the bilayer; it reads MDISISWVVIIVFVLSYLILM. Position 435 (cysteine 435) interacts with heme. Residues 471–496 form a disordered region; that stretch reads MSETPGLSGPRKNPLIMIPTIHNPTS.

Belongs to the cytochrome P450 family. Heme is required as a cofactor.

It localises to the membrane. It carries out the reaction gamma-terpinene + 2 reduced [NADPH--hemoprotein reductase] + 2 O2 = carvacrol + 2 oxidized [NADPH--hemoprotein reductase] + 3 H2O + 2 H(+). The catalysed reaction is (4S)-limonene + reduced [NADPH--hemoprotein reductase] + O2 = (1S,5R)-carveol + oxidized [NADPH--hemoprotein reductase] + H2O + H(+). It catalyses the reaction (4R)-limonene + reduced [NADPH--hemoprotein reductase] + O2 = (1R,5S)-carveol + oxidized [NADPH--hemoprotein reductase] + H2O + H(+). Its pathway is secondary metabolite biosynthesis; terpenoid biosynthesis. Functionally, involved in the biosynthesis of phenolic monoterpenes natural products thymol and carvacrol which have a broad range of biological activities acting as antimicrobial compounds, insecticides, antioxidants and pharmaceutical agents. Catalyzes the C2-hydroxylation of gamma-terpinene to produce carvacrol. Mediates also the C6-hydroxylation of (4S)-limonene and (4R)-limonene to form carveol. This chain is Cytochrome P450 71D180, found in Origanum majorana (Sweet marjoram).